The chain runs to 567 residues: GBF-interacting protein 1 (567 aa).

Disordered regions lie at residues 70 to 150, 164 to 192, and 545 to 567; these read ERKK…PSGI, DKVD…SKES, and PIGP…GNNY. 2 stretches are compositionally biased toward polar residues: residues 91–102 and 121–136; these read FASSYTDASNGR and TASS…TKPS. The span at 182–191 shows a compositional bias: basic and acidic residues; that stretch reads DVVEPDKSKE. Positions 550–567 are enriched in polar residues; sequence HVTNQQPQAARTNLGNNY.

Belongs to the GIP1 family. Monomer, homodimer, homooligomer. Under non-reducing conditions, predominantly present in high molecular weight forms, but predominates in low molecular weight monomers under reducing conditions. Interacts with BZIP16, BZIP68 and GBF1. Interacts with LBD18. In terms of tissue distribution, expressed in roots, leaves, stems and flowers.

It is found in the nucleus. Plant specific protein that enhances G-box-binding factor (GBF) DNA binding activity. May function as a nuclear chaperone or lever and regulate the multimeric state of GBFs. May contribute to bZIP-mediated gene regulation. Is able to refold denatured rhodanese in vitro. Reduces DNA-binding activity of BZIP16, BZIP68 and GBF1 under non-reducing conditions through direct physical interaction. Acts as a negative co-regulator in red and blue light-mediated hypocotyl elongation. Functions to promote hypocotyl elongation during the early stages of seedling development by regulating the repression effect by BZIP16 and the activation effect by BZIP68 and GBF1 on LHCB2.4 expression. Enhances transcriptional activity of LBD18 in the EXP14 promoter. May act as a transcriptional coactivator of LBD18. This Arabidopsis thaliana (Mouse-ear cress) protein is GBF-interacting protein 1.